We begin with the raw amino-acid sequence, 660 residues long: Leucine-rich repeat transmembrane protein FLRT2 (660 aa).

The N-terminal stretch at 1 to 35 (MGLQTTKWPSHGAFFLKSWLIISLGLYSQVSKLLA) is a signal peptide. 2 disulfide bridges follow: Cys-36/Cys-42 and Cys-40/Cys-49. One can recognise an LRRNT domain in the interval 36-63 (CPSVCRCDRNFVYCNERSLTSVPLGIPE). Over 36–541 (CPSVCRCDRN…TTSHSMGSPF (506 aa)) the chain is Extracellular. 10 LRR repeats span residues 64-85 (GVTV…AELH), 89-109 (SVHT…NLPK), 110-131 (NVRV…ALAQ), 134-155 (KLEE…DGAF), 160-181 (SLKL…LPVD), 182-202 (LQEL…AFQN), 205-225 (SLER…AEGT), 231-252 (KLKE…LPGT), 253-274 (HLIR…AFSN), and 277-298 (KLER…VFDN). An N-linked (GlcNAc...) asparagine glycan is attached at Asn-202. N-linked (GlcNAc...) asparagine glycosylation is present at Asn-298. One can recognise an LRRCT domain in the interval 310-362 (NPWFCDCSIKWVTEWLKYIPSSLNVRGFMCQGPEQVRGMAVRELNMNLLSCPT). Intrachain disulfides connect Cys-314-Cys-339 and Cys-316-Cys-360. A compositionally biased stretch (low complexity) spans 373 to 409 (APSTASPTTQPPTLSIPNPSRSYTPPTPTTSKLPTIP). The tract at residues 373 to 413 (APSTASPTTQPPTLSIPNPSRSYTPPTPTTSKLPTIPDWDG) is disordered. One can recognise a Fibronectin type-III domain in the interval 419-517 (PPISERIQLS…ICSEATTHAS (99 aa)). Residues Asn-433 and Asn-521 are each glycosylated (N-linked (GlcNAc...) asparagine). A helical transmembrane segment spans residues 542 to 562 (LLAGLIGGAVIFVLVVLLSVF). At 563–660 (CWHMHKKGRY…SVPDLEHCHT (98 aa)) the chain is on the cytoplasmic side.

Self-associates (via leucine-rich repeats), giving rise to homooligomers. Interacts with FGFR1. Interacts with FGFR2. Interacts (via extracellular domain) with ADGRL1/LPHN1. Interacts (via extracellular domain) with ADGRL3 (via olfactomedin-like domain). Interacts (via extracellular domain) with UNC5D (via the first Ig-like domain). Can also interact (via extracellular domain) with UNC5B, but with much lower affinity. Interacts (via extracellular domain) with FN1. Post-translationally, N-glycosylated. Proteolytic cleavage in the juxtamembrane region gives rise to a soluble ectodomain. Cleavage is probably effected by a metalloprotease. Expressed in pancreas, skeletal muscle, brain, and heart.

The protein localises to the cell membrane. It localises to the endoplasmic reticulum membrane. The protein resides in the cell junction. It is found in the focal adhesion. Its subcellular location is the secreted. The protein localises to the extracellular space. It localises to the extracellular matrix. The protein resides in the microsome membrane. It is found in the synapse. Its subcellular location is the synaptosome. Functions in cell-cell adhesion, cell migration and axon guidance. Mediates cell-cell adhesion via its interactions with ADGRL3 and probably also other latrophilins that are expressed at the surface of adjacent cells. May play a role in the migration of cortical neurons during brain development via its interaction with UNC5D. Mediates axon growth cone collapse and plays a repulsive role in neuron guidance via its interaction with UNC5D, and possibly also other UNC-5 family members. Plays a role in fibroblast growth factor-mediated signaling cascades. Required for normal organization of the cardiac basement membrane during embryogenesis, and for normal embryonic epicardium and heart morphogenesis. The chain is Leucine-rich repeat transmembrane protein FLRT2 (FLRT2) from Homo sapiens (Human).